Reading from the N-terminus, the 271-residue chain is Elongation factor Ts (271 aa).

Residues 76 to 79 are involved in Mg(2+) ion dislocation from EF-Tu; it reads TDFV.

The protein belongs to the EF-Ts family.

Its subcellular location is the cytoplasm. In terms of biological role, associates with the EF-Tu.GDP complex and induces the exchange of GDP to GTP. It remains bound to the aminoacyl-tRNA.EF-Tu.GTP complex up to the GTP hydrolysis stage on the ribosome. The sequence is that of Elongation factor Ts from Mycolicibacterium vanbaalenii (strain DSM 7251 / JCM 13017 / BCRC 16820 / KCTC 9966 / NRRL B-24157 / PYR-1) (Mycobacterium vanbaalenii).